Reading from the N-terminus, the 64-residue chain is Small ribosomal subunit protein eS17 (64 aa).

Belongs to the eukaryotic ribosomal protein eS17 family.

The protein is Small ribosomal subunit protein eS17 of Methanospirillum hungatei JF-1 (strain ATCC 27890 / DSM 864 / NBRC 100397 / JF-1).